Reading from the N-terminus, the 380-residue chain is Tryptophan 2,3-dioxygenase (380 aa).

Substrate contacts are provided by residues 57 to 61 and R128; that span reads FIITH. Residue H313 coordinates heme. Substrate is bound at residue T328.

Belongs to the tryptophan 2,3-dioxygenase family. Homotetramer. Dimer of dimers. Heme is required as a cofactor.

It catalyses the reaction L-tryptophan + O2 = N-formyl-L-kynurenine. It functions in the pathway amino-acid degradation; L-tryptophan degradation via kynurenine pathway; L-kynurenine from L-tryptophan: step 1/2. Its pathway is pigment biosynthesis; ommochrome biosynthesis. Its function is as follows. Heme-dependent dioxygenase that catalyzes the oxidative cleavage of the L-tryptophan (L-Trp) pyrrole ring and converts L-tryptophan to N-formyl-L-kynurenine. Catalyzes the oxidative cleavage of the indole moiety. The polypeptide is Tryptophan 2,3-dioxygenase (Drosophila virilis (Fruit fly)).